A 237-amino-acid chain; its full sequence is 2-C-methyl-D-erythritol 4-phosphate cytidylyltransferase (237 aa).

The protein belongs to the IspD/TarI cytidylyltransferase family. IspD subfamily.

The catalysed reaction is 2-C-methyl-D-erythritol 4-phosphate + CTP + H(+) = 4-CDP-2-C-methyl-D-erythritol + diphosphate. The protein operates within isoprenoid biosynthesis; isopentenyl diphosphate biosynthesis via DXP pathway; isopentenyl diphosphate from 1-deoxy-D-xylulose 5-phosphate: step 2/6. Functionally, catalyzes the formation of 4-diphosphocytidyl-2-C-methyl-D-erythritol from CTP and 2-C-methyl-D-erythritol 4-phosphate (MEP). The polypeptide is 2-C-methyl-D-erythritol 4-phosphate cytidylyltransferase (Vibrio vulnificus (strain CMCP6)).